The following is a 108-amino-acid chain: Tetrahydromethanopterin S-methyltransferase subunit B (108 aa).

Residues 77–99 (FQGMFFGFWVTMAVLVLVTILAV) form a helical membrane-spanning segment.

It belongs to the MtrB family. As to quaternary structure, the complex is composed of 8 subunits; MtrA, MtrB, MtrC, MtrD, MtrE, MtrF, MtrG and MtrH.

The protein localises to the cell membrane. The enzyme catalyses 5-methyl-5,6,7,8-tetrahydromethanopterin + coenzyme M + 2 Na(+)(in) = 5,6,7,8-tetrahydromethanopterin + methyl-coenzyme M + 2 Na(+)(out). It functions in the pathway one-carbon metabolism; methanogenesis from CO(2); methyl-coenzyme M from 5,10-methylene-5,6,7,8-tetrahydromethanopterin: step 2/2. Part of a complex that catalyzes the formation of methyl-coenzyme M and tetrahydromethanopterin from coenzyme M and methyl-tetrahydromethanopterin. This is an energy-conserving, sodium-ion translocating step. In Methanococcus maripaludis (strain DSM 14266 / JCM 13030 / NBRC 101832 / S2 / LL), this protein is Tetrahydromethanopterin S-methyltransferase subunit B.